Here is a 981-residue protein sequence, read N- to C-terminus: MSEQERIQECLRKEIRSLLISTKDGLSPQELEKEYLLMVGNHLPLRILGYRSTMELVLDMPDVVRVCPGAGGTVILKAIPDESTKGIASLVAKQRSSHKLRNSMHKGRPSIYSGPRSHRRVPYRGRVAPILPAVVKSELKDLLALSPVLLSDFEKAFAKRFGRSFQYMQYGFLSMFEVLNAASDVISVEQTRAGSLLMLKKSVTEEKPRGCPAGKIFTQPFRMKQGSYSTGFPVAKPCFSQPTSNMEPPKQIMSMEKTSKLNVVETSRLNHTEKLNQLENTFKSVIAQIGPGGTISSELKHKIKFVVSKFPEGLFISKLLGEYEVIFKEQLSPKKLGFLNVTELVGALSDILHVEFRKGHQDLLVFDADKKPLPPVQSDKKIEAKACVSSPPRNSLSTAAVKETVWNCPSKKQKEPQQKICKKPNLVVKPLQLQVETNKSELNLAMANHDIPPDAVPNKKLCRLPPLDTSSLIGVFVEYIISPSQFYIRIYSRDSSELLEDMMIEMRRCYSNQLVSDRYVMPECFIQPGHLCCVRISEDKWWYRVIIHRVLEKQEVEVFYPDFGNIGIVQKSSLRFLKCCYTKLPAQAIPCSLAWVRPVEEHWTSKAILQFQKLCGLKPLVGVVDEYVDGILNIFLCDTSSNEDVYFHHVLRTEGHAIVCRENISSKGFSELNPLALYTTSSGGPEDIVLTELGYPSQQHYFNEDRKISPQSKESELRILDEIPTGMPCLESVTIGDDIWDENWLPLQAKMGKGGDAASHLFTASLGGKNQYSSCKEMPQKDWCFSTPKDTWDDSWQPSGLVNGTKVEVHKPEVLGAQEKNTGTNRTQKQLDINGSSDSSTLPKLEEFCTSLTQSEQSADGSQSEPNNSQTQPKQIQLSTAAPCSTTAVDDSAEKPSGSVESSPEILKNEDFSSSRAITLYKDKRQESVDQLSLILSYECQISQKLYIPRSTATAALGAAARLATSRSLLHWYPSVKRMEA.

Residues 7 to 80 (IQECLRKEIR…GGTVILKAIP (74 aa)) enclose the HTH OST-type 1 domain. Positions 98–108 (HKLRNSMHKGR) are enriched in basic residues. The disordered stretch occupies residues 98–118 (HKLRNSMHKGRPSIYSGPRSH). HTH OST-type domains follow at residues 127-202 (VAPI…LKKS) and 295-369 (ISSE…FDAD). Residues 525–584 (FIQPGHLCCVRISEDKWWYRVIIHRVLEKQEVEVFYPDFGNIGIVQKSSLRFLKCCYTKL) enclose the Tudor domain. The disordered stretch occupies residues 808 to 908 (EVHKPEVLGA…SVESSPEILK (101 aa)). Composition is skewed to polar residues over residues 819 to 842 (EKNTGTNRTQKQLDINGSSDSSTL) and 850 to 889 (TSLTQSEQSADGSQSEPNNSQTQPKQIQLSTAAPCSTTAV). S892 bears the Phosphoserine mark.

The protein belongs to the TDRD5 family.

The protein resides in the cytoplasm. Functionally, required during spermiogenesis to participate in the repression transposable elements and prevent their mobilization, which is essential for the germline integrity. Probably acts via the piRNA metabolic process, which mediates the repression of transposable elements during meiosis by forming complexes composed of piRNAs and Piwi proteins and govern the methylation and subsequent repression of transposons. Required for chromatoid body (CB) assembly. The chain is Tudor domain-containing protein 5 (TDRD5) from Homo sapiens (Human).